Consider the following 99-residue polypeptide: Small ribosomal subunit protein uS19 (99 aa).

The protein belongs to the universal ribosomal protein uS19 family.

In terms of biological role, protein S19 forms a complex with S13 that binds strongly to the 16S ribosomal RNA. This chain is Small ribosomal subunit protein uS19, found in Sulfurihydrogenibium sp. (strain YO3AOP1).